Consider the following 158-residue polypeptide: Large ribosomal subunit protein uL15 (158 aa).

A compositionally biased stretch (basic and acidic residues) spans 1–13; it reads MKLNEIKDNEGST. The disordered stretch occupies residues 1 to 44; it reads MKLNEIKDNEGSTHSRKRLGRGIGSGSGKTAGRGVKGQKSRSGV. Residues 21–35 show a composition bias toward gly residues; sequence RGIGSGSGKTAGRGV.

It belongs to the universal ribosomal protein uL15 family. In terms of assembly, part of the 50S ribosomal subunit.

Its function is as follows. Binds to the 23S rRNA. This chain is Large ribosomal subunit protein uL15, found in Rhizobium etli (strain ATCC 51251 / DSM 11541 / JCM 21823 / NBRC 15573 / CFN 42).